We begin with the raw amino-acid sequence, 159 residues long: Cyclic pyranopterin monophosphate synthase (159 aa).

Residues 75–77 (LCH) and 113–114 (ME) each bind substrate. Residue D128 is part of the active site.

The protein belongs to the MoaC family. As to quaternary structure, homohexamer; trimer of dimers.

The catalysed reaction is (8S)-3',8-cyclo-7,8-dihydroguanosine 5'-triphosphate = cyclic pyranopterin phosphate + diphosphate. It functions in the pathway cofactor biosynthesis; molybdopterin biosynthesis. Catalyzes the conversion of (8S)-3',8-cyclo-7,8-dihydroguanosine 5'-triphosphate to cyclic pyranopterin monophosphate (cPMP). The polypeptide is Cyclic pyranopterin monophosphate synthase (Yersinia pseudotuberculosis serotype IB (strain PB1/+)).